A 332-amino-acid chain; its full sequence is Lipoyl synthase (332 aa).

[4Fe-4S] cluster is bound by residues Cys74, Cys79, Cys85, Cys100, Cys104, Cys107, and Ser314. The region spanning 85-303 (CFGKGTATFM…EEEAYKMGFT (219 aa)) is the Radical SAM core domain.

Belongs to the radical SAM superfamily. Lipoyl synthase family. The cofactor is [4Fe-4S] cluster.

Its subcellular location is the cytoplasm. It carries out the reaction [[Fe-S] cluster scaffold protein carrying a second [4Fe-4S](2+) cluster] + N(6)-octanoyl-L-lysyl-[protein] + 2 oxidized [2Fe-2S]-[ferredoxin] + 2 S-adenosyl-L-methionine + 4 H(+) = [[Fe-S] cluster scaffold protein] + N(6)-[(R)-dihydrolipoyl]-L-lysyl-[protein] + 4 Fe(3+) + 2 hydrogen sulfide + 2 5'-deoxyadenosine + 2 L-methionine + 2 reduced [2Fe-2S]-[ferredoxin]. The protein operates within protein modification; protein lipoylation via endogenous pathway; protein N(6)-(lipoyl)lysine from octanoyl-[acyl-carrier-protein]: step 2/2. Its function is as follows. Catalyzes the radical-mediated insertion of two sulfur atoms into the C-6 and C-8 positions of the octanoyl moiety bound to the lipoyl domains of lipoate-dependent enzymes, thereby converting the octanoylated domains into lipoylated derivatives. In Paracidovorax citrulli (strain AAC00-1) (Acidovorax citrulli), this protein is Lipoyl synthase.